The chain runs to 221 residues: Ras-related protein RabS (221 aa).

Residue 16-23 (GDNQCGKS) coordinates GTP. An Effector region motif is present at residues 38–47 (GIQLWHGIEI). GTP contacts are provided by residues 71 to 75 (DGNGG) and 137 to 140 (NKCD). The residue at position 218 (C218) is a Cysteine methyl ester. C218 carries S-geranylgeranyl cysteine lipidation. Positions 219-221 (IIN) are cleaved as a propeptide — removed in mature form.

This sequence belongs to the small GTPase superfamily. Rab family.

It localises to the cell membrane. The protein is Ras-related protein RabS (rabS) of Dictyostelium discoideum (Social amoeba).